Consider the following 1038-residue polypeptide: Kinesin-like protein KIF17 (1038 aa).

A Kinesin motor domain is found at 5–335 (SVKVVVRCRP…LRYANRAKNI (331 aa)). Residue 91–98 (GQTGSGKS) participates in ATP binding. Residues 346-470 (KDALLREYQE…ETEAILKAEV (125 aa)) are a coiled coil. Disordered stretches follow at residues 379-401 (TQTPPGPVQSEEKLLSPTTVQQD), 503-559 (LSMP…GPEE), and 636-657 (DSSQTVVPQIPKQPSSADLLEP). Polar residues-rich tracts occupy residues 533–551 (SEFSFESNECSTLEDSATS) and 636–651 (DSSQTVVPQIPKQPSS). The stretch at 748–855 (QQVLARLQLL…QLEKIDYLAT (108 aa)) forms a coiled coil. 2 disordered regions span residues 916 to 940 (VVPTGTQNKPARKTSAVDSGEPHMQ) and 976 to 1038 (MKSL…GEPL). Positions 983 to 1000 (NSPPGLNSSLSNNSALPP) are enriched in low complexity.

The protein belongs to the TRAFAC class myosin-kinesin ATPase superfamily. Kinesin family. As to quaternary structure, homodimer. Interacts with APBA1 (via PDZ domain); the interaction is direct and is required for association of KIF17 with the cargo that is to be transported. Interacts with IFT B complex components IFT52 and IFT57. Interacts with IFT70B. Interacts with PIWIL1. Interacts with TBATA. Highly expressed in the gray matter of the brain, especially in the hippocampus.

It localises to the cytoplasm. It is found in the cytoskeleton. The protein resides in the cell projection. Its subcellular location is the cilium. The protein localises to the dendrite. In terms of biological role, dendrite-specific motor protein which, in association with the Apba1-containing complex (LIN-10-LIN-2-LIN-7 complex), transports vesicles containing N-methyl-D-aspartate (NMDA) receptor subunit NR2B along microtubules. This Mus musculus (Mouse) protein is Kinesin-like protein KIF17 (Kif17).